A 220-amino-acid polypeptide reads, in one-letter code: GTP cyclohydrolase 1 (220 aa).

Residues Cys109, His112, and Cys180 each contribute to the Zn(2+) site.

It belongs to the GTP cyclohydrolase I family. Toroid-shaped homodecamer, composed of two pentamers of five dimers.

The enzyme catalyses GTP + H2O = 7,8-dihydroneopterin 3'-triphosphate + formate + H(+). It functions in the pathway cofactor biosynthesis; 7,8-dihydroneopterin triphosphate biosynthesis; 7,8-dihydroneopterin triphosphate from GTP: step 1/1. The chain is GTP cyclohydrolase 1 from Yersinia pseudotuberculosis serotype O:1b (strain IP 31758).